The sequence spans 500 residues: Zinc finger and BTB domain-containing protein 34 (500 aa).

Positions 32–96 constitute a BTB domain; the sequence is CDIIVHIQGQ…CYTGRMSLQL (65 aa). Ser164 carries the post-translational modification Phosphoserine. The tract at residues 164–209 is disordered; that stretch reads SPPYCSQGRQPTASSDLRMETTPSKALRSRLQEEGHSDRGSSGSVS. The span at 193–202 shows a compositional bias: basic and acidic residues; the sequence is RLQEEGHSDR. Glycyl lysine isopeptide (Lys-Gly) (interchain with G-Cter in SUMO2) cross-links involve residues Lys235 and Lys237. Basic and acidic residues predominate over residues 236–245; the sequence is VKMEKSDRPS. Disordered regions lie at residues 236 to 256 and 341 to 360; these read VKME…GDDG and SDSE…RERS. C2H2-type zinc fingers lie at residues 372 to 394 and 400 to 422; these read LICI…MRLH and FVCK…IRGH. A Glycyl lysine isopeptide (Lys-Gly) (interchain with G-Cter in SUMO2) cross-link involves residue Lys426. The C2H2-type 3 zinc finger occupies 428 to 451; that stretch reads FRCEICGKCFPFQGTLNQHLRKNH. Ser463 bears the Phosphoserine mark. Residue Lys474 forms a Glycyl lysine isopeptide (Lys-Gly) (interchain with G-Cter in SUMO2) linkage. The disordered stretch occupies residues 478 to 500; it reads DASASEMGLDSRMEIHTVSDAPD.

Expressed in several tissues, including heart, brain, thymus, skeletal muscle, small intestine, testis, kidney, placenta, peripheral blood cells and adult and fetal liver.

The protein resides in the nucleus. Its function is as follows. May be a transcriptional repressor. This is Zinc finger and BTB domain-containing protein 34 (ZBTB34) from Homo sapiens (Human).